The primary structure comprises 521 residues: Amidase 1 (521 aa).

Active-site charge relay system residues include lysine 112 and serine 187. Residues serine 187 and isoleucine 208–serine 211 each bind substrate. Serine 211 (acyl-ester intermediate) is an active-site residue.

The protein belongs to the amidase family.

It carries out the reaction a monocarboxylic acid amide + H2O = a monocarboxylate + NH4(+). Its pathway is xenobiotic degradation. In terms of biological role, amidase; part of the Fusarium detoxification of benzoxazolinone cluster 1 (FDB1) involved in the degradation of benzoxazolinones produced by the host plant. Maize, wheat, and rye produce the 2 benzoxazinone phytoanticipins 2,4-dihy-droxy-7-methoxy-1,4-benzoxazin-3-one (DIMBOA) and 2,4-dihydroxy-1,4-benzoxazin-3-one (DIBOA) that, due to their inherent instability once released, spontaneously degrade to the more stable corresponding benzoxazolinones, 6-methoxy-2-benzoxazolinone (MBOA) and 2-benzoxazolinone (BOA), respectively. The first step in the detoxification of benzoxazolinones involves the hydrolysis of the cyclic ester bond of benzoxazolinones by the FDB1 cluster gamma-lactamase MBL1 to aminophenols. MBL1 is able to convert BOA into 2-aminophenol (2-AP), as well as MBOA into 5-methoxy-2-aminophenol (2-AMP). The FDB2 cluster N-malonyltransferase FDB2/NAT1 then metabolizes aminophenols via N-malonylation to non-toxic malonamic acids. FDB2/NAT1 converts 2-AP into N-(2-hydroxyphenyl) malonamic acid (HPMA) and 2-AMP into N-(2-hydroxy-4-methoxyphenyl) malonamic acid (HMPMA). The duplicated dienlactone hydrolases DLH1 and DLH2 may provide redundant function for hydrolyzing the lactone moiety in the BOA molecule. The roles of the amidases an other enzymes encoded by the 2 FDB clusters have not been identified so far. This is Amidase 1 from Gibberella moniliformis (strain M3125 / FGSC 7600) (Maize ear and stalk rot fungus).